A 512-amino-acid chain; its full sequence is Proline--tRNA ligase (512 aa).

The span at 460–470 (SDEDDEQDTTD) shows a compositional bias: acidic residues. Residues 460–484 (SDEDDEQDTTDENMGVNNDTTVESN) form a disordered region.

Belongs to the class-II aminoacyl-tRNA synthetase family. ProS type 3 subfamily. As to quaternary structure, homodimer.

Its subcellular location is the cytoplasm. The enzyme catalyses tRNA(Pro) + L-proline + ATP = L-prolyl-tRNA(Pro) + AMP + diphosphate. Catalyzes the attachment of proline to tRNA(Pro) in a two-step reaction: proline is first activated by ATP to form Pro-AMP and then transferred to the acceptor end of tRNA(Pro). This chain is Proline--tRNA ligase, found in Haloquadratum walsbyi (strain DSM 16790 / HBSQ001).